A 272-amino-acid chain; its full sequence is Acyl-[acyl-carrier-protein]--UDP-N-acetylglucosamine O-acyltransferase (272 aa).

This sequence belongs to the transferase hexapeptide repeat family. LpxA subfamily. Homotrimer.

It localises to the cytoplasm. It catalyses the reaction a (3R)-hydroxyacyl-[ACP] + UDP-N-acetyl-alpha-D-glucosamine = a UDP-3-O-[(3R)-3-hydroxyacyl]-N-acetyl-alpha-D-glucosamine + holo-[ACP]. Its pathway is glycolipid biosynthesis; lipid IV(A) biosynthesis; lipid IV(A) from (3R)-3-hydroxytetradecanoyl-[acyl-carrier-protein] and UDP-N-acetyl-alpha-D-glucosamine: step 1/6. Functionally, involved in the biosynthesis of lipid A, a phosphorylated glycolipid that anchors the lipopolysaccharide to the outer membrane of the cell. In Rhizobium etli (strain ATCC 51251 / DSM 11541 / JCM 21823 / NBRC 15573 / CFN 42), this protein is Acyl-[acyl-carrier-protein]--UDP-N-acetylglucosamine O-acyltransferase.